Here is a 71-residue protein sequence, read N- to C-terminus: UPF0346 protein SZO_05010 (71 aa).

It belongs to the UPF0346 family.

This is UPF0346 protein SZO_05010 from Streptococcus equi subsp. zooepidemicus (strain H70).